Here is a 152-residue protein sequence, read N- to C-terminus: Small ribosomal subunit protein uS15 (152 aa).

Belongs to the universal ribosomal protein uS15 family. In terms of assembly, part of the 30S ribosomal subunit.

The protein is Small ribosomal subunit protein uS15 of Methanospirillum hungatei JF-1 (strain ATCC 27890 / DSM 864 / NBRC 100397 / JF-1).